Here is a 441-residue protein sequence, read N- to C-terminus: Hydroxycinnamoyl-CoA:5-hydroxyanthranilate N-hydroxycinnamoyltransferase HHT1 (441 aa).

Catalysis depends on proton acceptor residues His-158 and Asp-388.

This sequence belongs to the plant acyltransferase family.

The catalysed reaction is 5-hydroxyanthranilate + (E)-4-coumaroyl-CoA = avenanthramide A + CoA. The enzyme catalyses 5-hydroxyanthranilate + (E)-caffeoyl-CoA = avenanthramide C + CoA. Involved in the biosynthesis of avenanthramide phytoalexins, which are phenolic alkaloids found mainly in oats. Catalyzes the N-acylation of 5-hydroxyanthranilate with 4-coumaroyl-CoA or caffeoyl-CoA as acyl donors, forming avenanthramide A and avenanthramide C, respectively. Does not accept feruloyl-CoA as a substrate. In Avena sativa (Oat), this protein is Hydroxycinnamoyl-CoA:5-hydroxyanthranilate N-hydroxycinnamoyltransferase HHT1.